We begin with the raw amino-acid sequence, 176 residues long: Pectinesterase inhibitor 1 (176 aa).

An N-terminal signal peptide occupies residues 1–25 (MAANLRNNAFLSSLMFLLLIGSSYA). 2 disulfide bridges follow: C35/C44 and C98/C138. Residue N154 is glycosylated (N-linked (GlcNAc...) asparagine).

The protein belongs to the PMEI family. As to quaternary structure, monomer and homodimer. Interacts in vitro with PPME1. Highest expression in flowers. Expressed exclusively at the pollen tube tip.

Its subcellular location is the secreted. The protein resides in the extracellular space. It localises to the apoplast. Its function is as follows. Inhibits pectin methylesterase (PME) from flowers and siliques. Inhibits PME from leaves. This is Pectinesterase inhibitor 1 from Arabidopsis thaliana (Mouse-ear cress).